The following is a 357-amino-acid chain: Protein RecA (357 aa).

67–74 (GPESSGKT) contacts ATP. A disordered region spans residues 335 to 357 (LSSSASDDENSEGNVDFETGEVF).

It belongs to the RecA family.

The protein resides in the cytoplasm. Its function is as follows. Can catalyze the hydrolysis of ATP in the presence of single-stranded DNA, the ATP-dependent uptake of single-stranded DNA by duplex DNA, and the ATP-dependent hybridization of homologous single-stranded DNAs. It interacts with LexA causing its activation and leading to its autocatalytic cleavage. In Shewanella sp. (strain MR-4), this protein is Protein RecA.